A 428-amino-acid chain; its full sequence is Flotillin-2 (428 aa).

A lipid anchor (N-myristoyl glycine) is attached at G2. C4 carries S-palmitoyl cysteine; by ZDHHC5 lipidation. C19 is lipidated: S-palmitoyl cysteine. C20 carries S-palmitoyl cysteine; by ZDHHC5 lipidation. Position 405 is a phosphoserine (S405).

This sequence belongs to the band 7/mec-2 family. Flotillin subfamily. Heterooligomeric complex of flotillin-1 and flotillin-2 and caveolin-1 and caveolin-2. Interacts with ECPAS. In terms of processing, ZDHHC5-catalyzed palmitoylation may be required for the formation of higher-order complexes and for neurite outgrowth in cultured neural stem cells.

The protein localises to the cell membrane. It is found in the membrane. Its subcellular location is the caveola. The protein resides in the endosome. In terms of biological role, may act as a scaffolding protein within caveolar membranes, functionally participating in formation of caveolae or caveolae-like vesicles. May be involved in epidermal cell adhesion and epidermal structure and function. In Bos taurus (Bovine), this protein is Flotillin-2 (FLOT2).